A 321-amino-acid chain; its full sequence is Lipoyl synthase (321 aa).

Residues cysteine 68, cysteine 73, cysteine 79, cysteine 94, cysteine 98, cysteine 101, and serine 308 each coordinate [4Fe-4S] cluster. The region spanning 80-297 is the Radical SAM core domain; that stretch reads FNHGTATFMI…KEEALAMGFT (218 aa).

Belongs to the radical SAM superfamily. Lipoyl synthase family. [4Fe-4S] cluster is required as a cofactor.

The protein resides in the cytoplasm. It carries out the reaction [[Fe-S] cluster scaffold protein carrying a second [4Fe-4S](2+) cluster] + N(6)-octanoyl-L-lysyl-[protein] + 2 oxidized [2Fe-2S]-[ferredoxin] + 2 S-adenosyl-L-methionine + 4 H(+) = [[Fe-S] cluster scaffold protein] + N(6)-[(R)-dihydrolipoyl]-L-lysyl-[protein] + 4 Fe(3+) + 2 hydrogen sulfide + 2 5'-deoxyadenosine + 2 L-methionine + 2 reduced [2Fe-2S]-[ferredoxin]. It functions in the pathway protein modification; protein lipoylation via endogenous pathway; protein N(6)-(lipoyl)lysine from octanoyl-[acyl-carrier-protein]: step 2/2. In terms of biological role, catalyzes the radical-mediated insertion of two sulfur atoms into the C-6 and C-8 positions of the octanoyl moiety bound to the lipoyl domains of lipoate-dependent enzymes, thereby converting the octanoylated domains into lipoylated derivatives. In Photorhabdus laumondii subsp. laumondii (strain DSM 15139 / CIP 105565 / TT01) (Photorhabdus luminescens subsp. laumondii), this protein is Lipoyl synthase.